The sequence spans 305 residues: Sulfate adenylyltransferase subunit 2 (305 aa).

Belongs to the PAPS reductase family. CysD subfamily. In terms of assembly, heterodimer composed of CysD, the smaller subunit, and CysN.

The catalysed reaction is sulfate + ATP + H(+) = adenosine 5'-phosphosulfate + diphosphate. The protein operates within sulfur metabolism; hydrogen sulfide biosynthesis; sulfite from sulfate: step 1/3. With CysN forms the ATP sulfurylase (ATPS) that catalyzes the adenylation of sulfate producing adenosine 5'-phosphosulfate (APS) and diphosphate, the first enzymatic step in sulfur assimilation pathway. APS synthesis involves the formation of a high-energy phosphoric-sulfuric acid anhydride bond driven by GTP hydrolysis by CysN coupled to ATP hydrolysis by CysD. The chain is Sulfate adenylyltransferase subunit 2 from Pseudomonas fluorescens (strain ATCC BAA-477 / NRRL B-23932 / Pf-5).